A 287-amino-acid polypeptide reads, in one-letter code: Elongation factor Ts (287 aa).

The tract at residues T80–L83 is involved in Mg(2+) ion dislocation from EF-Tu.

It belongs to the EF-Ts family.

The protein localises to the cytoplasm. Associates with the EF-Tu.GDP complex and induces the exchange of GDP to GTP. It remains bound to the aminoacyl-tRNA.EF-Tu.GTP complex up to the GTP hydrolysis stage on the ribosome. This chain is Elongation factor Ts, found in Pseudomonas syringae pv. tomato (strain ATCC BAA-871 / DC3000).